The chain runs to 114 residues: Type 4 adapter protein IcmS (114 aa).

In terms of assembly, the T4BSS is a complex nanomachine composed of several subcomplexes. This subunit is part of the Type IV Coupling Complex (T4CC), a subcomplex composed of the DotLMNYZ core and the IcmSW-LvgA adapter subunits, linked by the C-terminal tail of DotL. Interacts with IcmW. IcmS and IcmW form a stable complex. Interacts directly with the type 4 coupling protein DotL. Interacts with LvgA. Interacts with effector proteins.

Its subcellular location is the cytoplasm. Interaction with DotL is critical for the export of IcmSW-dependent substrates. In terms of biological role, component of the Dot/Icm type IVB secretion system (T4BSS), which is used to inject bacterial effector proteins into eukaryotic host cells. Part of a subcomplex which recruits effector proteins and delivers them to the core transmembrane subcomplex. The IcmS/IcmW protein complex plays an important role in protein translocation by interacting with multiple Dot/Icm effector proteins to facilitate their translocation into host cells. Interaction promotes conformational changes in the effector protein, which may facilitate display of a C-terminal translocation signal. May maintain the substrates in a translocation competent form. Required for intracellular growth in host cells, replicative phagosome formation and phagosome trafficking. IcmS is required for IcmW stability. The polypeptide is Type 4 adapter protein IcmS (Legionella pneumophila subsp. pneumophila (strain Philadelphia 1 / ATCC 33152 / DSM 7513)).